Reading from the N-terminus, the 255-residue chain is Uracil-DNA glycosylase (255 aa).

The Proton acceptor role is filled by aspartate 93.

It belongs to the uracil-DNA glycosylase (UDG) superfamily. UNG family.

It localises to the host nucleus. The enzyme catalyses Hydrolyzes single-stranded DNA or mismatched double-stranded DNA and polynucleotides, releasing free uracil.. Its function is as follows. Excises uracil residues from the DNA which can arise as a result of misincorporation of dUMP residues by DNA polymerase or deamination of cytosines. Therefore may reduce deleterious uracil incorporation into the viral genome, particularly in terminally differentiated cells which lack DNA repair enzymes. In Human herpesvirus 6A (strain Uganda-1102) (HHV-6 variant A), this protein is Uracil-DNA glycosylase (U81).